Here is a 443-residue protein sequence, read N- to C-terminus: Putative F-box/FBD/LRR-repeat protein At3g49030 (443 aa).

The region spanning 20-68 (EDRISELPEDLLLQILSDIPTENVIATSVLSKRWRSLWKMVPNLTFDFT) is the F-box domain. LRR repeat units follow at residues 74–100 (HQTF…QLNF), 152–179 (ILEI…RLYE), 180–205 (VHFK…SVHR), 218–252 (VPSL…NIVG), 272–297 (ISDV…SLES), and 320–345 (KERE…KLTG). Residues 357 to 408 (NWNPPKCVPECLLFHLEKFLWTGYEWQRGDEKEVATYILENARLLKKATFST) enclose the FBD domain.

This chain is Putative F-box/FBD/LRR-repeat protein At3g49030, found in Arabidopsis thaliana (Mouse-ear cress).